A 134-amino-acid polypeptide reads, in one-letter code: ATP synthase epsilon chain (134 aa).

Basic and acidic residues predominate over residues 94 to 104 (AKLAKSRAESH). A disordered region spans residues 94–115 (AKLAKSRAESHLEDDDDNTDIN).

Belongs to the ATPase epsilon chain family. F-type ATPases have 2 components, CF(1) - the catalytic core - and CF(0) - the membrane proton channel. CF(1) has five subunits: alpha(3), beta(3), gamma(1), delta(1), epsilon(1). CF(0) has three main subunits: a, b and c.

It is found in the cell membrane. In terms of biological role, produces ATP from ADP in the presence of a proton gradient across the membrane. The sequence is that of ATP synthase epsilon chain from Staphylococcus epidermidis (strain ATCC 12228 / FDA PCI 1200).